We begin with the raw amino-acid sequence, 345 residues long: tRNA dimethylallyltransferase (345 aa).

Residue 9–16 (GPTASGKS) coordinates ATP. A substrate-binding site is contributed by 11–16 (TASGKS). 2 interaction with substrate tRNA regions span residues 34–37 (DSMQ) and 195–199 (QRMIR).

This sequence belongs to the IPP transferase family. As to quaternary structure, monomer. The cofactor is Mg(2+).

It carries out the reaction adenosine(37) in tRNA + dimethylallyl diphosphate = N(6)-dimethylallyladenosine(37) in tRNA + diphosphate. Catalyzes the transfer of a dimethylallyl group onto the adenine at position 37 in tRNAs that read codons beginning with uridine, leading to the formation of N6-(dimethylallyl)adenosine (i(6)A). The protein is tRNA dimethylallyltransferase of Orientia tsutsugamushi (strain Ikeda) (Rickettsia tsutsugamushi).